Here is a 37-residue protein sequence, read N- to C-terminus: Large ribosomal subunit protein bL36c (37 aa).

It belongs to the bacterial ribosomal protein bL36 family.

The protein resides in the plastid. Its subcellular location is the chloroplast. The chain is Large ribosomal subunit protein bL36c (rpl36) from Cyanidium caldarium (Red alga).